Reading from the N-terminus, the 460-residue chain is Tyrosine phenol-lyase (460 aa).

N6-(pyridoxal phosphate)lysine is present on lysine 260.

This sequence belongs to the beta-eliminating lyase family. Homotetramer. The cofactor is pyridoxal 5'-phosphate.

The catalysed reaction is L-tyrosine + H2O = phenol + pyruvate + NH4(+). The protein is Tyrosine phenol-lyase of Fusobacterium nucleatum subsp. nucleatum (strain ATCC 25586 / DSM 15643 / BCRC 10681 / CIP 101130 / JCM 8532 / KCTC 2640 / LMG 13131 / VPI 4355).